The primary structure comprises 203 residues: NAD(P)H dehydrogenase (quinone) (203 aa).

A Flavodoxin-like domain is found at 3–194 (VLIPFYSMYG…AGARYQGKYI (192 aa)). FMN is bound by residues 9–14 (SMYGHI) and 82–84 (TRF). Y11 contributes to the NAD(+) binding site. W102 is a binding site for substrate. Residues 117-123 (SSATQHG) and H138 contribute to the FMN site.

This sequence belongs to the WrbA family. Requires FMN as cofactor.

The enzyme catalyses a quinone + NADH + H(+) = a quinol + NAD(+). It catalyses the reaction a quinone + NADPH + H(+) = a quinol + NADP(+). The chain is NAD(P)H dehydrogenase (quinone) from Geobacter metallireducens (strain ATCC 53774 / DSM 7210 / GS-15).